A 492-amino-acid polypeptide reads, in one-letter code: Glycerol kinase (492 aa).

Thr11 provides a ligand contact to ADP. Thr11 and Thr12 together coordinate ATP. Thr11 provides a ligand contact to sn-glycerol 3-phosphate. An ADP-binding site is contributed by Lys15. Sn-glycerol 3-phosphate contacts are provided by Arg79, Glu80, Tyr129, and Asp238. Arg79, Glu80, Tyr129, Asp238, and Gln239 together coordinate glycerol. Residues Thr260, Gly302, Gly403, and Asn407 each coordinate ADP. ATP-binding residues include Thr260, Gly302, and Gly403.

Belongs to the FGGY kinase family.

The enzyme catalyses glycerol + ATP = sn-glycerol 3-phosphate + ADP + H(+). The protein operates within polyol metabolism; glycerol degradation via glycerol kinase pathway; sn-glycerol 3-phosphate from glycerol: step 1/1. Its activity is regulated as follows. Inhibited by fructose 1,6-bisphosphate (FBP). In terms of biological role, key enzyme in the regulation of glycerol uptake and metabolism. Catalyzes the phosphorylation of glycerol to yield sn-glycerol 3-phosphate. This Aquifex aeolicus (strain VF5) protein is Glycerol kinase.